Reading from the N-terminus, the 191-residue chain is Protein GrpE (191 aa).

The segment covering 1–13 (MSEKKNKKEKLAE) has biased composition (basic and acidic residues). The tract at residues 1-40 (MSEKKNKKEKLAEEIEQEELNSLDESVETVEEEATEETLT) is disordered. The span at 14–40 (EIEQEELNSLDESVETVEEEATEETLT) shows a compositional bias: acidic residues.

It belongs to the GrpE family. As to quaternary structure, homodimer.

The protein localises to the cytoplasm. In terms of biological role, participates actively in the response to hyperosmotic and heat shock by preventing the aggregation of stress-denatured proteins, in association with DnaK and GrpE. It is the nucleotide exchange factor for DnaK and may function as a thermosensor. Unfolded proteins bind initially to DnaJ; upon interaction with the DnaJ-bound protein, DnaK hydrolyzes its bound ATP, resulting in the formation of a stable complex. GrpE releases ADP from DnaK; ATP binding to DnaK triggers the release of the substrate protein, thus completing the reaction cycle. Several rounds of ATP-dependent interactions between DnaJ, DnaK and GrpE are required for fully efficient folding. This chain is Protein GrpE, found in Listeria innocua serovar 6a (strain ATCC BAA-680 / CLIP 11262).